Here is a 188-residue protein sequence, read N- to C-terminus: Inactive cysteine S-methyltransferase OspZ (188 aa).

Belongs to the NleE/OspZ family.

The protein resides in the secreted. The protein localises to the host cytoplasm. Its subcellular location is the host nucleus. Its function is as follows. Inactive effector protein: in contrast to other members of the family, does not have the ability to inhibit host cell NF-kappa-B activation. Probably lacks cysteine S-methyltransferase activity due to its inability to bind S-adenosyl-L-methionine at the C-terminus. This Shigella flexneri protein is Inactive cysteine S-methyltransferase OspZ.